The primary structure comprises 1345 residues: Protein dispatched homolog 2 (1345 aa).

The segment at 1–28 (MAPEASPERSCSLHTCPLEDPTGAPVPP) is disordered. The chain crosses the membrane as a helical span at residues 125–145 (VAVIVGCLAFIFLCTLAGLLG). Asparagine 304 and asparagine 420 each carry an N-linked (GlcNAc...) asparagine glycan. Positions 429–598 (LGLKPRLLKY…LLWLPATVVL (170 aa)) constitute an SSD domain. Helical transmembrane passes span 440–460 (LAEDTMYPLIALVVIFFGMSL), 465–485 (LFITFMSLLGVLGSLMVAYFL), 497–517 (FVNLAALLLLSGVCVNYTLIF), 544–564 (FGYLLLVSGLTTSAAFYGSYL), 572–592 (CFALFMGTAVLVHMGLTLLWL), and 659–679 (YIWICWFAALAAGGAYIGGVS). N-linked (GlcNAc...) asparagine glycosylation occurs at asparagine 776. A run of 5 helical transmembrane segments spans residues 919–939 (PAVVLGLALALAFATLLLSTW), 945–965 (LFSVAAVAGTVLLTVGLLVLL), 974–994 (ALFLSASVGLSVDLTINYCIS), 1019–1039 (AMTTGVLFASGVIMLPSTILL), and 1043–1063 (LGIIVMMVKFLGCGFASFFFQ). 2 disordered regions span residues 1251 to 1271 (VRVPDSVGTSPEVMNGTGHPI) and 1295 to 1345 (PNMP…GYSS). A compositionally biased stretch (polar residues) spans 1297–1306 (MPNSHHSSLS). Arginine 1310 is modified (omega-N-methylarginine).

This sequence belongs to the dispatched family.

It localises to the membrane. This Mus musculus (Mouse) protein is Protein dispatched homolog 2 (Disp2).